A 213-amino-acid chain; its full sequence is Heat shock protein 27 (213 aa).

2 positions are modified to phosphoserine: Ser-58 and Ser-75. Positions 71-182 constitute a sHSP domain; that stretch reads SRRASGGPNA…SERIVQIQQT (112 aa). The disordered stretch occupies residues 157–213; it reads VLTLKAPPPPSKEQAKSERIVQIQQTGPAHLSVKAPAPEAGDGKAENGSGEKMETSK. Residues 197–213 show a composition bias toward basic and acidic residues; it reads GDGKAENGSGEKMETSK.

This sequence belongs to the small heat shock protein (HSP20) family.

This chain is Heat shock protein 27 (Hsp27), found in Drosophila melanogaster (Fruit fly).